Consider the following 44-residue polypeptide: Mu-conotoxin-like Cal 12.1.2f (44 aa).

Intrachain disulfides connect Cys3–Cys15, Cys10–Cys27, Cys17–Cys32, and Cys26–Cys38. Position 16 is a 6'-bromotryptophan (Trp16). A 4-hydroxyproline modification is found at Pro22. 2 positions are modified to 6'-bromotryptophan: Trp36 and Trp37. Pro39 carries the 4-hydroxyproline modification. Trp43 is modified (6'-bromotryptophan).

Expressed by the venom duct.

Its subcellular location is the secreted. Functionally, mu-conotoxins block voltage-gated sodium channels. This toxin reversibly blocks voltage-gated sodium channel in cephalopods, with no alteration in the voltage dependence of sodium conductance or on the kinetics of inactivation. This chain is Mu-conotoxin-like Cal 12.1.2f, found in Californiconus californicus (California cone).